Consider the following 372-residue polypeptide: Glutamate 5-kinase (372 aa).

ATP is bound at residue K14. Substrate is bound by residues S54, D141, and N153. Residue 173–174 (TD) participates in ATP binding. Positions 280–358 (RGHVVIDAGA…GEIESVLGYM (79 aa)) constitute a PUA domain.

It belongs to the glutamate 5-kinase family.

It localises to the cytoplasm. It catalyses the reaction L-glutamate + ATP = L-glutamyl 5-phosphate + ADP. It functions in the pathway amino-acid biosynthesis; L-proline biosynthesis; L-glutamate 5-semialdehyde from L-glutamate: step 1/2. In terms of biological role, catalyzes the transfer of a phosphate group to glutamate to form L-glutamate 5-phosphate. This Burkholderia lata (strain ATCC 17760 / DSM 23089 / LMG 22485 / NCIMB 9086 / R18194 / 383) protein is Glutamate 5-kinase.